We begin with the raw amino-acid sequence, 496 residues long: Catalase-A (496 aa).

Catalysis depends on residues His-54 and Asn-128. Residue Tyr-338 coordinates heme. The Microbody targeting signal motif lies at 494 to 496 (SNL).

It belongs to the catalase family. It depends on heme as a cofactor.

It is found in the peroxisome matrix. The enzyme catalyses 2 H2O2 = O2 + 2 H2O. Functionally, catalyzes the degradation of hydrogen peroxide (H(2)O(2)) generated by peroxisomal oxidases to water and oxygen, thereby protecting cells from the toxic effects of hydrogen peroxide. The polypeptide is Catalase-A (catA) (Dictyostelium discoideum (Social amoeba)).